The sequence spans 172 residues: Large ribosomal subunit protein uL10 (172 aa).

Belongs to the universal ribosomal protein uL10 family. As to quaternary structure, part of the ribosomal stalk of the 50S ribosomal subunit. The N-terminus interacts with L11 and the large rRNA to form the base of the stalk. The C-terminus forms an elongated spine to which L12 dimers bind in a sequential fashion forming a multimeric L10(L12)X complex.

In terms of biological role, forms part of the ribosomal stalk, playing a central role in the interaction of the ribosome with GTP-bound translation factors. This chain is Large ribosomal subunit protein uL10, found in Chlorobium luteolum (strain DSM 273 / BCRC 81028 / 2530) (Pelodictyon luteolum).